Consider the following 741-residue polypeptide: Melanoma-associated antigen D4 (741 aa).

The span at 1-13 (MAEGSFSVQSESY) shows a compositional bias: polar residues. Disordered regions lie at residues 1–27 (MAEGSFSVQSESYSVEDMDEGSDEVGE), 136–206 (RVAT…EGPS), 247–296 (MAFP…KALA), and 323–379 (PEGA…QPSL). Residues 14–27 (SVEDMDEGSDEVGE) are compositionally biased toward acidic residues. Polar residues-rich tracts occupy residues 140 to 151 (PQVSGEDTQPTT) and 187 to 196 (TSAQSQTGSP). Residues 354–363 (DEYESSEEER) show a composition bias toward acidic residues. An MAGE domain is found at 413 to 611 (LQERANKLVK…REWKAHFLEA (199 aa)). The interval 700 to 720 (VSSGTNGGASTSVLDGPSTSS) is disordered. Over residues 701–720 (SSGTNGGASTSVLDGPSTSS) the composition is skewed to polar residues.

In terms of assembly, interacts with TRIM27. As to expression, expressed only in brain and ovary among normal tissues. Isoform 1 and isoform 2 are specifically expressed in glioma cells among cancer cells. Detected in some renal cell carcinoma samples.

In terms of biological role, may enhance ubiquitin ligase activity of RING-type zinc finger-containing E3 ubiquitin-protein ligases. Proposed to act through recruitment and/or stabilization of the Ubl-conjugating enzyme (E2) at the E3:substrate complex. The sequence is that of Melanoma-associated antigen D4 (MAGED4) from Homo sapiens (Human).